The sequence spans 2768 residues: Thyroglobulin (2768 aa).

The first 20 residues, 1-20 (MMTLVLWVSTLLSSVCLVAA), serve as a signal peptide directing secretion. Position 25 is an iodotyrosine; alternate (Y25). The residue at position 25 (Y25) is a Sulfotyrosine; alternate. Thyroxine; alternate is present on Y25. Triiodothyronine; alternate is present on Y25. 4 Thyroglobulin type-1 domains span residues 32-93 (LRPC…PTAC), 94-161 (LSFC…PTRC), 162-298 (PRSC…RFRC), and 299-359 (PTKC…PLFC). Disulfide bonds link C35–C53, C64–C71, C73–C93, C97–C121, C132–C139, C141–C161, C165–C184, and C195–C236. Y109 carries the iodotyrosine modification. An N-linked (GlcNAc...) asparagine glycan is attached at N111. Y150 carries the post-translational modification Iodotyrosine; alternate. Diiodotyrosine; alternate is present on Y150. Residue N199 is glycosylated (N-linked (GlcNAc...) asparagine). An iodotyrosine mark is found at Y235 and Y259. Disulfide bonds link C302–C320, C331–C337, C339–C365, C408–C608, C631–C636, C638–C658, C662–C687, and C698–C703. N484, N496, and N545 each carry an N-linked (GlcNAc...) asparagine glycan. 6 consecutive Thyroglobulin type-1 domains span residues 605 to 658 (AQAC…HPRC), 659 to 726 (PTKC…PKLC), 727 to 922 (PSVC…IPAC), 923 to 1074 (PGPC…MPQC), 1075 to 1146 (PTSC…SAQC), and 1147 to 1211 (PGLC…QPAC). Residue Y704 is modified to Iodotyrosine; alternate. Y704 is subject to Thyroxine; alternate. The residue at position 704 (Y704) is a Triiodothyronine; alternate. At Y704 the chain carries Diiodotyrosine; alternate. 16 disulfides stabilise this stretch: C705–C726, C730–C763, C774–C899, C901–C922, C926–C1032, C1043–C1050, C1052–C1074, C1078–C1109, C1127–C1146, C1150–C1170, C1182–C1189, C1191–C1211, C1216–C1265, C1232–C1246, C1306–C1356, and C1331–C1347. N-linked (GlcNAc...) asparagine glycosylation is present at N748. Y785 carries the iodotyrosine modification. N-linked (GlcNAc...) asparagine glycosylation is present at N817. The residue at position 867 (Y867) is an Iodotyrosine; alternate. Y867 bears the Diiodotyrosine; alternate mark. At Y884 the chain carries Diiodotyrosine. N948 carries N-linked (GlcNAc...) asparagine glycosylation. The residue at position 993 (Y993) is an Iodotyrosine; alternate. Y993 is subject to Diiodotyrosine; alternate. N1017 is a glycosylation site (N-linked (GlcNAc...) asparagine). N1141 is a glycosylation site (N-linked (GlcNAc...) asparagine). An Iodotyrosine modification is found at Y1310. Y1310 bears the Thyroxine mark. N1349 and N1365 each carry an N-linked (GlcNAc...) asparagine glycan. Disulfide bonds link C1441/C1458, C1461/C1472, C1475/C1489, C1492/C1509, C1513/C1522, C1542/C1564, C1602/C1626, C1606/C1612, and C1638/C1661. Type II repeat units follow at residues 1455 to 1468 (PLGCVKCPEGSFSQ), 1469 to 1485 (DGKCTPCPAGTYQGQAG), and 1486 to 1502 (SSACIPCPRGRTTTITG). The 55-residue stretch at 1510 to 1564 (VTDCQRDEAGLQCDQNGQYQANQKDMDSGEVFCVDSEGQRLQWLQTEAGLSESQC) folds into the Thyroglobulin type-1 11 domain. The stretch at 1602–1722 (CLADCADDEA…GTNLTDTHLF (121 aa)) is one Type IIIA repeat. Residue N1715 is glycosylated (N-linked (GlcNAc...) asparagine). Cystine bridges form between C1723/C1748, C1727/C1733, C1732/C1834, and C1759/C1776. One copy of the Type IIIB repeat lies at 1723–1891 (CLLACDQDSC…LFSAEQANLW (169 aa)). N-linked (GlcNAc...) asparagine glycosylation is found at N1773 and N1866. Disulfide bonds link C1892-C1918, C1896-C1903, C1927-C1938, C1995-C2023, C1999-C2005, C2004-C2075, and C2034-C2047. One copy of the Type IIIA repeat lies at 1892-1994 (CLSRCAQEPV…EKLISNGFFE (103 aa)). Residue N1937 is glycosylated (N-linked (GlcNAc...) asparagine). The Type IIIB repeat unit spans residues 1995-2127 (CERLCDRDPC…SATRNFSLAQ (133 aa)). An N-linked (GlcNAc...) asparagine glycan is attached at N2012. N-linked (GlcNAc...) asparagine glycosylation is present at N2122. Residues 2128–2185 (DFCLQECSRHQDCLVTTLQIQQGVVRCVFYPDIQSCEHSLRSKTCWLLLHEEAAYIYR) form a Type IIIA repeat. Intrachain disulfides connect C2130-C2154, C2134-C2140, and C2163-C2172. Y2184 is modified (iodotyrosine). The cholinesterase-like (ChEL) stretch occupies residues 2188–2768 (GAPLHQSDGI…LEPVPKSYSK (581 aa)). A glycan (N-linked (GlcNAc...) asparagine) is linked at N2251. Residues C2265 and C2282 are joined by a disulfide bond. Residues N2296 and N2445 are each glycosylated (N-linked (GlcNAc...) asparagine). A disulfide bridge connects residues C2443 and C2454. Y2541 is subject to Thyroxine. Y2574 bears the Iodotyrosine; alternate mark. Residue Y2574 is modified to Thyroxine; alternate. Y2574 carries the post-translational modification Triiodothyronine; alternate. Y2574 is subject to Diiodotyrosine; alternate. Residue N2583 is glycosylated (N-linked (GlcNAc...) asparagine). Iodotyrosine occurs at positions 2588 and 2618. C2592 and C2716 form a disulfide bridge. Y2698 is modified (diiodotyrosine). A disordered region spans residues 2731–2768 (GAKDAQLTKSGEEDLEVGPGSEEDFSGSLEPVPKSYSK). A compositionally biased stretch (acidic residues) spans 2743-2755 (EDLEVGPGSEEDF). Y2766 is subject to Iodotyrosine; alternate. Y2766 is modified (thyroxine; alternate). Triiodothyronine; alternate is present on Y2766. Residue Y2766 is modified to Diiodotyrosine; alternate.

It belongs to the type-B carboxylesterase/lipase family. Monomer. Homodimer (via ChEL region); occurs in the endoplasmic reticulum and is required for export to the Golgi apparatus. Homooligomer; disulfide-linked; stored in this form in the thyroid follicle lumen. Iodinated on tyrosine residues by TPO. There are 4 pairs of iodinated tyrosines used for coupling: acceptor Tyr-25 is coupled to donor Tyr-150 or Tyr-235, acceptor Tyr-2574 is coupled to donor Tyr-2541, acceptor Tyr-2766 in monomer 1 is coupled to donor Tyr-2766 in monomer 2 and acceptor Tyr-1310 in monomer 1 is coupled to donor Tyr-109 in monomer 2. In terms of processing, sulfated tyrosines are desulfated during iodination. Post-translationally, undergoes sequential proteolysis by cathepsins to release thyroxine (T4) and triiodothyronine (T3) hormones. In the thyroid follicle lumen, cross-linked TG (storage form) is solubilized by limited proteolysis mediated by cathepsins CTSB and/or CTSL. Partially cleaved TG is further processed by CTSK/cathepsin K and/or CTSL resulting in the release of thyroxine (T4). Following endocytosis, further processing occurs leading to the release of triiodothyronine (T3) and more T4 hormones. As to expression, specifically expressed in the thyroid gland.

Its subcellular location is the secreted. In terms of biological role, acts as a substrate for the production of iodinated thyroid hormones thyroxine (T4) and triiodothyronine (T3). The synthesis of T3 and T4 involves iodination of selected tyrosine residues of TG/thyroglobulin followed by their oxidative coupling. Following TG re-internalization and lysosomal-mediated proteolysis, T3 and T4 are released from the polypeptide backbone leading to their secretion into the bloodstream. One dimer produces 7 thyroid hormone molecules. The protein is Thyroglobulin (Tg) of Rattus norvegicus (Rat).